We begin with the raw amino-acid sequence, 303 residues long: MDDFSSISLLSLAMLVGCYVSGIIPLAVNFSEEKLKLVTVLGAGLLCGTALAVIIPEGVHALYEEILEAKHHDLGEIHKVKEAETGAETSVAHEHDHSNLHAYIGVSLVLGFVFMLLVDQIGSSHMHSADDPEAARAASSKITTTLGLVVHAAADGVALGAAASTSQTSVQLIVFVAIMLHKAPAAFGLVSFLMHAGLERNRIRKHLLVFALAAPVLSMLTYLGLSKSSKEALSEINATGVAMLFSAGTFLYVATVHVLPEVGGMGHSHKPDVGAAKGLSRLEVCALVLGCLIPLVLSIGHQH.

Residues 7 to 27 (ISLLSLAMLVGCYVSGIIPLA) form a helical membrane-spanning segment. A glycan (N-linked (GlcNAc...) asparagine) is linked at Asn-29. 5 consecutive transmembrane segments (helical) span residues 35–55 (LKLVTVLGAGLLCGTALAVII), 102–122 (AYIGVSLVLGFVFMLLVDQIG), 142–162 (ITTTLGLVVHAAADGVALGAA), 172–192 (LIVFVAIMLHKAPAAFGLVSF), and 206–226 (HLLVFALAAPVLSMLTYLGLS). Asn-237 carries an N-linked (GlcNAc...) asparagine glycan. Helical transmembrane passes span 240–260 (GVAMLFSAGTFLYVATVHVLP) and 282–302 (LEVCALVLGCLIPLVLSIGHQ).

This sequence belongs to the ZIP transporter (TC 2.A.5) family.

Its subcellular location is the golgi apparatus. It is found in the trans-Golgi network membrane. The protein resides in the cell membrane. The protein localises to the cytoplasm. It localises to the perinuclear region. Its subcellular location is the mitochondrion. It is found in the nucleus. It catalyses the reaction Zn(2+)(in) = Zn(2+)(out). In terms of biological role, transports zinc ions across cell and organelle membranes into the cytoplasm and regulates intracellular zinc homeostasis. Participates in the zinc ions efflux out of the secretory compartments. Regulates intracellular zinc level, resulting in the enhancement of AKT1 and MAPK3/MAPK1 (Erk1/2) phosphorylation in response to the BCR activation. Also functions as a membrane androgen receptor that mediates, through a G protein, the non-classical androgen signaling pathway, characterized by the activation of MAPK3/MAPK1 (Erk1/2) and transcription factors CREB1 or ATF1. Moreover, has dual functions as a membrane-bound androgen receptor and as an androgen-dependent zinc transporter both of which are mediated through an inhibitory G protein (Gi) that mediates both MAP kinase and zinc signaling leading to the androgen-dependent apoptotic process. This chain is Zinc transporter ZIP9-A (slc39a9-a), found in Xenopus laevis (African clawed frog).